We begin with the raw amino-acid sequence, 298 residues long: MTAVISLPDPPQRASRGPRVAGPGQDRLGKRLRRQVGQAIADFGMIEAGDKVMVCLSGGKDSYTLLDLLLQLQKRAPVPFELVAVNLDQKQPGFPEHVLPEYLAALGVPYQIIEQDTYSVVSRVIPEGRTMCSLCSRLRRGALYNHAKAHGFTRIALGHHCDDMVATLFMNLFHHAKLAAMPPKLLSDDGQHVVIRPLAYVREHDIAEYAQARRFPIIPCTLCGSQESLQRRQVGLMLKQWDQDHPGRIEQIARAMADVRPAQLADATLFDFRALGHSGHAAHADAWLADAVPETPAD.

The segment at 1 to 26 (MTAVISLPDPPQRASRGPRVAGPGQD) is disordered. The PP-loop motif motif lies at 57-62 (SGGKDS). Cys132, Cys135, and Cys223 together coordinate [4Fe-4S] cluster.

It belongs to the TtcA family. Homodimer. Mg(2+) is required as a cofactor. It depends on [4Fe-4S] cluster as a cofactor.

It is found in the cytoplasm. The catalysed reaction is cytidine(32) in tRNA + S-sulfanyl-L-cysteinyl-[cysteine desulfurase] + AH2 + ATP = 2-thiocytidine(32) in tRNA + L-cysteinyl-[cysteine desulfurase] + A + AMP + diphosphate + H(+). It functions in the pathway tRNA modification. Its function is as follows. Catalyzes the ATP-dependent 2-thiolation of cytidine in position 32 of tRNA, to form 2-thiocytidine (s(2)C32). The sulfur atoms are provided by the cysteine/cysteine desulfurase (IscS) system. This chain is tRNA-cytidine(32) 2-sulfurtransferase, found in Stenotrophomonas maltophilia (strain R551-3).